Here is a 291-residue protein sequence, read N- to C-terminus: N-acetylmannosamine kinase (291 aa).

ATP-binding positions include 5-12 (AIDIGGTK) and 132-139 (GVGGGVVS). Zn(2+) is bound by residues His156, Cys166, Cys168, and Cys173.

It belongs to the ROK (NagC/XylR) family. NanK subfamily. As to quaternary structure, homodimer.

The enzyme catalyses an N-acyl-D-mannosamine + ATP = an N-acyl-D-mannosamine 6-phosphate + ADP + H(+). It participates in amino-sugar metabolism; N-acetylneuraminate degradation; D-fructose 6-phosphate from N-acetylneuraminate: step 2/5. Catalyzes the phosphorylation of N-acetylmannosamine (ManNAc) to ManNAc-6-P. The protein is N-acetylmannosamine kinase of Shigella flexneri serotype 5b (strain 8401).